The following is an 87-amino-acid chain: Small ribosomal subunit protein bS20 (87 aa).

The interval 1–22 is disordered; it reads MANIKSQIKRIGTNKKAQERNK.

Belongs to the bacterial ribosomal protein bS20 family.

Functionally, binds directly to 16S ribosomal RNA. The chain is Small ribosomal subunit protein bS20 from Clavibacter sepedonicus (Clavibacter michiganensis subsp. sepedonicus).